The sequence spans 399 residues: Methylthioribose kinase (399 aa).

ATP is bound by residues Asn-40, Lys-57, and 111-113 (EDL). Residue Asp-229 participates in substrate binding. An ATP-binding site is contributed by 246 to 248 (DAE). Residue Arg-344 coordinates substrate.

It belongs to the methylthioribose kinase family. As to quaternary structure, homodimer.

The enzyme catalyses 5-(methylsulfanyl)-D-ribose + ATP = 5-(methylsulfanyl)-alpha-D-ribose 1-phosphate + ADP + H(+). The protein operates within amino-acid biosynthesis; L-methionine biosynthesis via salvage pathway; S-methyl-5-thio-alpha-D-ribose 1-phosphate from S-methyl-5'-thioadenosine (hydrolase route): step 2/2. Its function is as follows. Catalyzes the phosphorylation of methylthioribose into methylthioribose-1-phosphate. The polypeptide is Methylthioribose kinase (Yersinia enterocolitica serotype O:8 / biotype 1B (strain NCTC 13174 / 8081)).